The chain runs to 544 residues: CTP synthase (544 aa).

The segment at 1 to 265 (MTQYIFITGG…DDLVVKHFGL (265 aa)) is amidoligase domain. Ser13 is a CTP binding site. Ser13 lines the UTP pocket. ATP contacts are provided by residues 14-19 (SLGKGI) and Asp71. Asp71 and Glu139 together coordinate Mg(2+). Residues 146–148 (DIE), 186–191 (KTKPTQ), and Lys222 each bind CTP. Residues 186 to 191 (KTKPTQ) and Lys222 contribute to the UTP site. In terms of domain architecture, Glutamine amidotransferase type-1 spans 290–541 (TVAMVGKYVN…IAAALDYQTE (252 aa)). Gly351 is an L-glutamine binding site. Cys378 (nucleophile; for glutamine hydrolysis) is an active-site residue. Residues 379 to 382 (LGLQ), Glu402, and Arg469 contribute to the L-glutamine site. Active-site residues include His514 and Glu516.

It belongs to the CTP synthase family. As to quaternary structure, homotetramer.

It carries out the reaction UTP + L-glutamine + ATP + H2O = CTP + L-glutamate + ADP + phosphate + 2 H(+). It catalyses the reaction L-glutamine + H2O = L-glutamate + NH4(+). The catalysed reaction is UTP + NH4(+) + ATP = CTP + ADP + phosphate + 2 H(+). The protein operates within pyrimidine metabolism; CTP biosynthesis via de novo pathway; CTP from UDP: step 2/2. Its activity is regulated as follows. Allosterically activated by GTP, when glutamine is the substrate; GTP has no effect on the reaction when ammonia is the substrate. The allosteric effector GTP functions by stabilizing the protein conformation that binds the tetrahedral intermediate(s) formed during glutamine hydrolysis. Inhibited by the product CTP, via allosteric rather than competitive inhibition. In terms of biological role, catalyzes the ATP-dependent amination of UTP to CTP with either L-glutamine or ammonia as the source of nitrogen. Regulates intracellular CTP levels through interactions with the four ribonucleotide triphosphates. The chain is CTP synthase from Dichelobacter nodosus (strain VCS1703A).